The primary structure comprises 352 residues: MNLSEFDYHLPDELIAQEALADRAASRMLVVHREQGRWEDRCFRDLPEFLRPGDCLVLNDSRVFPARLFGHRSGVHSLAVGKNNPKRHEFLSGAVEVFLLRAVSQDGRDWQALVRPGRKMRTGERIVFDEGLEAEIIARGEFGERTVRFLGSGDLYAAFDRIGHVPLPPYIKRDDSPADRERYQTVFAREKGSVAAPTAGLHFTPEVIERCQAAGADVATVTLHVGLGTFQPLHQEVVEEVKLHTEHYRITADNAGKIGAATRVVAVGTTSVRTLETAARDGVLEGETDIFLYPGVPFRRTGAMLTNFHLPRTSLLVLVSAFAGKDLMLAAYRHAVEARYRFYSYGDCMLIV.

It belongs to the QueA family. As to quaternary structure, monomer.

The protein resides in the cytoplasm. The enzyme catalyses 7-aminomethyl-7-carbaguanosine(34) in tRNA + S-adenosyl-L-methionine = epoxyqueuosine(34) in tRNA + adenine + L-methionine + 2 H(+). Its pathway is tRNA modification; tRNA-queuosine biosynthesis. Functionally, transfers and isomerizes the ribose moiety from AdoMet to the 7-aminomethyl group of 7-deazaguanine (preQ1-tRNA) to give epoxyqueuosine (oQ-tRNA). The chain is S-adenosylmethionine:tRNA ribosyltransferase-isomerase from Solibacter usitatus (strain Ellin6076).